The chain runs to 72 residues: Cold shock-like protein CspD (72 aa).

The CSD domain occupies 4–64; that stretch reads GIVKWFNNAK…SDKGSHATKI (61 aa).

The protein resides in the cytoplasm. The sequence is that of Cold shock-like protein CspD (cspD) from Haemophilus influenzae (strain ATCC 51907 / DSM 11121 / KW20 / Rd).